The primary structure comprises 221 residues: Endonuclease V (221 aa).

Mg(2+) contacts are provided by Asp43 and Asp111.

Belongs to the endonuclease V family. Requires Mg(2+) as cofactor.

Its subcellular location is the cytoplasm. It carries out the reaction Endonucleolytic cleavage at apurinic or apyrimidinic sites to products with a 5'-phosphate.. In terms of biological role, DNA repair enzyme involved in the repair of deaminated bases. Selectively cleaves double-stranded DNA at the second phosphodiester bond 3' to a deoxyinosine leaving behind the intact lesion on the nicked DNA. The sequence is that of Endonuclease V from Azotobacter vinelandii (strain DJ / ATCC BAA-1303).